Here is a 217-residue protein sequence, read N- to C-terminus: Phosphatidylserine decarboxylase proenzyme (217 aa).

The active-site Schiff-base intermediate with substrate; via pyruvic acid is serine 187. Residue serine 187 is modified to Pyruvic acid (Ser); by autocatalysis.

The protein belongs to the phosphatidylserine decarboxylase family. PSD-A subfamily. Heterodimer of a large membrane-associated beta subunit and a small pyruvoyl-containing alpha subunit. Pyruvate serves as cofactor. Is synthesized initially as an inactive proenzyme. Formation of the active enzyme involves a self-maturation process in which the active site pyruvoyl group is generated from an internal serine residue via an autocatalytic post-translational modification. Two non-identical subunits are generated from the proenzyme in this reaction, and the pyruvate is formed at the N-terminus of the alpha chain, which is derived from the carboxyl end of the proenzyme. The post-translation cleavage follows an unusual pathway, termed non-hydrolytic serinolysis, in which the side chain hydroxyl group of the serine supplies its oxygen atom to form the C-terminus of the beta chain, while the remainder of the serine residue undergoes an oxidative deamination to produce ammonia and the pyruvoyl prosthetic group on the alpha chain.

It is found in the cell membrane. It catalyses the reaction a 1,2-diacyl-sn-glycero-3-phospho-L-serine + H(+) = a 1,2-diacyl-sn-glycero-3-phosphoethanolamine + CO2. The protein operates within phospholipid metabolism; phosphatidylethanolamine biosynthesis; phosphatidylethanolamine from CDP-diacylglycerol: step 2/2. Functionally, catalyzes the formation of phosphatidylethanolamine (PtdEtn) from phosphatidylserine (PtdSer). The protein is Phosphatidylserine decarboxylase proenzyme of Thermobifida fusca (strain YX).